Consider the following 776-residue polypeptide: Protocadherin beta-16 (776 aa).

An N-terminal signal peptide occupies residues 1–28 (MEIGWMHNRRQRQVLVFFVLLSLSGAGA). Over 29-690 (ELGSYSVVEE…TQANSLTVYL (662 aa)) the chain is Extracellular. Cadherin domains lie at 35-133 (VVEE…SPMF), 138-242 (MILK…APEF), 247-347 (YKVQ…PPQV), 352-451 (LTSP…APTF), and 456-561 (YTLF…SPFV). 2 N-linked (GlcNAc...) asparagine glycosylation sites follow: Asn-418 and Asn-436. An N-linked (GlcNAc...) asparagine glycan is attached at Asn-567. Residues 568–671 (GSAPCTELVP…LVDGFSQPFL (104 aa)) enclose the Cadherin 6 domain. A helical transmembrane segment spans residues 691-711 (VVALASVSSLFLFSVLLFVAV). Residues 712–776 (RLCRRSRAAS…LKPIIPNFSP (65 aa)) are Cytoplasmic-facing.

It localises to the membrane. In terms of biological role, potential calcium-dependent cell-adhesion protein. May be involved in the establishment and maintenance of specific neuronal connections in the brain. The protein is Protocadherin beta-16 of Homo sapiens (Human).